A 123-amino-acid chain; its full sequence is Hydrogenase maturation factor HypA (123 aa).

A Ni(2+)-binding site is contributed by histidine 2. The Zn(2+) site is built by cysteine 73, cysteine 76, cysteine 90, and cysteine 93.

It belongs to the HypA/HybF family.

Involved in the maturation of [NiFe] hydrogenases. Required for nickel insertion into the metal center of the hydrogenase. The chain is Hydrogenase maturation factor HypA from Roseiflexus sp. (strain RS-1).